The primary structure comprises 284 residues: Bifunctional protein FolD (284 aa).

NADP(+)-binding positions include 166-168 (GAS), serine 191, and isoleucine 232.

Belongs to the tetrahydrofolate dehydrogenase/cyclohydrolase family. In terms of assembly, homodimer.

The catalysed reaction is (6R)-5,10-methylene-5,6,7,8-tetrahydrofolate + NADP(+) = (6R)-5,10-methenyltetrahydrofolate + NADPH. The enzyme catalyses (6R)-5,10-methenyltetrahydrofolate + H2O = (6R)-10-formyltetrahydrofolate + H(+). Its pathway is one-carbon metabolism; tetrahydrofolate interconversion. Catalyzes the oxidation of 5,10-methylenetetrahydrofolate to 5,10-methenyltetrahydrofolate and then the hydrolysis of 5,10-methenyltetrahydrofolate to 10-formyltetrahydrofolate. The polypeptide is Bifunctional protein FolD (Neisseria meningitidis serogroup C (strain 053442)).